Reading from the N-terminus, the 95-residue chain is uncharacterized protein (95 aa).

It belongs to the asfivirus DP96R family.

This is an uncharacterized protein from African swine fever virus (isolate Warthog/Namibia/Wart80/1980) (ASFV).